Here is a 531-residue protein sequence, read N- to C-terminus: Type 2 DNA topoisomerase 6 subunit B (531 aa).

ATP-binding positions include N42, D76, 97–98 (SK), 106–113 (GMYGLGVK), and K427.

Belongs to the TOP6B family. As to quaternary structure, homodimer. Heterotetramer of two Top6A and two Top6B chains.

The catalysed reaction is ATP-dependent breakage, passage and rejoining of double-stranded DNA.. Relaxes both positive and negative superturns and exhibits a strong decatenase activity. This chain is Type 2 DNA topoisomerase 6 subunit B, found in Metallosphaera sedula (strain ATCC 51363 / DSM 5348 / JCM 9185 / NBRC 15509 / TH2).